We begin with the raw amino-acid sequence, 340 residues long: MKLRHLLLTGAALTSFAATTVHGETVVNGAKLTVTKNLDLVNSNALIPNTDFTFKIEPDTTVNEDGNKFKGVALNTPMTKVTYTNSDKGGSNTKTAEFDFSEVTFEKPGVYYYKVTEEKIDKVPGVSYDTTSYTVQVHVLWNEEQQKPVATYIVGYKEGSKVPIQFKNSLDSTTLTVKKKVSGTGGDRSKDFNFGLTLKANQYYKASEKVMIEKTTKGGQAPVQTEASIDQLYHFTLKDGESIKVTNLPVGVDYVVTEDDYKSEKYTTNVEVSPQDGAVKNIAGNSTEQETSTDKDMTITFTNKKDFEVPTGVAMTVAPYIALGIVAVGGALYFVKKKNA.

An N-terminal signal peptide occupies residues 1–23 (MKLRHLLLTGAALTSFAATTVHG). Cross-links (isoaspartyl lysine isopeptide (Lys-Asn)) lie at residues 36–168 (KNLD…QFKN) and 179–303 (KKVS…TFTN). Lys-161 is covalently cross-linked (Threonyl lysine isopeptide (Lys-Thr) (interchain with T-311)). An EVPTG sorting signal motif is present at residues 308–312 (EVPTG). At Thr-311 the chain carries Pentaglycyl murein peptidoglycan amidated threonine; alternate. Thr-311 is covalently cross-linked (Threonyl lysine isopeptide (Thr-Lys) (interchain with K-161); alternate). Residues 312–340 (GVAMTVAPYIALGIVAVGGALYFVKKKNA) constitute a propeptide, removed by sortase C1.

Belongs to the Streptococcus pilin family. In terms of assembly, forms columns of about 3-nanometers in diameter of head-to-tail-assembled molecules. In terms of processing, proteolytically processed and assembled in pili through a transpeptidation reaction catalyzed by the sortase C1. The last pilin subunit is cross-linked to the peptidoglycan.

Its subcellular location is the secreted. It is found in the cell wall. The protein localises to the fimbrium. Major component of the pilus. A stack of the pilin subunits, joined by intermolecular isopeptide bonds, forms the pilus. The pilus is required for bacterial adhesion to host cells, for bacterial aggregation, and for biofilm formation. The chain is Pilin from Streptococcus pyogenes serotype M1.